Consider the following 522-residue polypeptide: MKNYKIITLLLIISILFNIIRSNKISLKDSDSGSNGNQDIQILINDILNNCSSSESSSCFGTQWGVVADIYTPSNGEFTNIFSLNELQAFTPASNTKLFTTISIFYTFGEDFKVFTPFFTDKPFNSVSGGSSNSELDFICVKGMGDPSMSIDNLIEAAKFFSSNPTMKKVNKLLLDTSFYNIGNGVDGNIPSAWEWEDLTSTYGSIPTPLIINENTMDIYITPSNVIGGKPTASFKYSGEDKYLPVIILATTTTTSNSSTSTLNYSFKMSSQSIYITGNCDINGGIQIITVPILDPEQYFLTVFSALLEDGGVEISQTAIGSCNYTGMDYKSFEVISPELSEMLNYTLLTSNNLYAETFLRQMGTFNSAASESTPTYQAGLEYIQQTLSIPTSLYTQVDGSGLSRNNFITPKSLITVIENVYTNVGDPQHDYISYLPVASLSGTLSKRFINTPASGIVHAKTGSMTGVNSLTGVILPNGLSDDQQNSIFFSIIANNSPAQNTDIIDIIDQIVILLTKFILSS.

S94 functions as the Acyl-ester intermediate in the catalytic mechanism. K97 functions as the Proton acceptor in the catalytic mechanism. S351 is an active-site residue. Residue K461 coordinates substrate.

This sequence belongs to the peptidase S13 family.

It catalyses the reaction Preferential cleavage: (Ac)2-L-Lys-D-Ala-|-D-Ala. Also transpeptidation of peptidyl-alanyl moieties that are N-acyl substituents of D-alanine.. With respect to regulation, inhibited by penicillin G. Functionally, carboxypeptidase. The sequence is that of Penicillin-sensitive carboxypeptidase A (pscA) from Dictyostelium discoideum (Social amoeba).